The primary structure comprises 256 residues: MLSRVVLSAAATAAPCLKNAAALGPGVLQATRAFHTGQPRLAPLPPLPEYGGKVRLGLIPEEFFQFLYPKTGVTGPYVLGTGLSLYFLSKEIYVITPETFSTISVVGLIVYVIKKYGASFGEFIDKLNEEKIAQLEEVKQSSMKQIQDAIDMEKAQQALVQKRHYLFDVQRNNIALALEVTYRERLHKAYKEVKNRLDYHISVQNMMRRKEEEHMIDWVEKHVVKSISVQQEKETIAKCIEDLKLLAKKAQAQPIM.

The N-terminal 42 residues, 1-42, are a transit peptide targeting the mitochondrion; the sequence is MLSRVVLSAAATAAPCLKNAAALGPGVLQATRAFHTGQPRLA. Residue Lys131 is modified to N6-succinyllysine. N6-acetyllysine is present on residues Lys139, Lys154, Lys162, Lys221, Lys225, Lys233, and Lys244.

This sequence belongs to the eukaryotic ATPase B chain family. In terms of assembly, component of the ATP synthase complex composed at least of ATP5F1A/subunit alpha, ATP5F1B/subunit beta, ATP5MC1/subunit c (homooctomer), MT-ATP6/subunit a, MT-ATP8/subunit 8, ATP5ME/subunit e, ATP5MF/subunit f, ATP5MG/subunit g, ATP5MK/subunit k, ATP5MJ/subunit j, ATP5F1C/subunit gamma, ATP5F1D/subunit delta, ATP5F1E/subunit epsilon, ATP5PF/subunit F6, ATP5PB/subunit b, ATP5PD/subunit d, ATP5PO/subunit OSCP. ATP synthase complex consists of a soluble F(1) head domain (subunits alpha(3) and beta(3)) - the catalytic core - and a membrane F(0) domain - the membrane proton channel (subunits c, a, 8, e, f, g, k and j). These two domains are linked by a central stalk (subunits gamma, delta, and epsilon) rotating inside the F1 region and a stationary peripheral stalk (subunits F6, b, d, and OSCP).

It localises to the mitochondrion. The protein resides in the mitochondrion inner membrane. Functionally, subunit b, of the mitochondrial membrane ATP synthase complex (F(1)F(0) ATP synthase or Complex V) that produces ATP from ADP in the presence of a proton gradient across the membrane which is generated by electron transport complexes of the respiratory chain. ATP synthase complex consist of a soluble F(1) head domain - the catalytic core - and a membrane F(1) domain - the membrane proton channel. These two domains are linked by a central stalk rotating inside the F(1) region and a stationary peripheral stalk. During catalysis, ATP synthesis in the catalytic domain of F(1) is coupled via a rotary mechanism of the central stalk subunits to proton translocation. In vivo, can only synthesize ATP although its ATP hydrolase activity can be activated artificially in vitro. Part of the complex F(0) domain. Part of the complex F(0) domain and the peripheric stalk, which acts as a stator to hold the catalytic alpha(3)beta(3) subcomplex and subunit a/ATP6 static relative to the rotary elements. This is ATP synthase peripheral stalk subunit b, mitochondrial from Mus musculus (Mouse).